Consider the following 480-residue polypeptide: Sestrin-2 (480 aa).

Residue Met-1 is modified to N-acetylmethionine. A disordered region spans residues Pro-20–Ser-45. The segment at Gly-66–Ser-239 is N-terminal domain; mediates the alkylhydroperoxide reductase activity. Residue Cys-125 is the Cysteine sulfenic acid (-SOH) intermediate of the active site. Lys-175 participates in a covalent cross-link: Glycyl lysine isopeptide (Lys-Gly) (interchain with G-Cter in ubiquitin). Disordered regions lie at residues Ala-222–Phe-252 and Leu-272–Lys-291. Ser-249 is subject to Phosphoserine. Positions Pro-308 to Thr-480 are C-terminal domain; mediates TORC1 regulation. Residues Thr-374 to Thr-377, Thr-386, and Glu-451 each bind L-leucine.

The protein belongs to the sestrin family. In terms of assembly, interacts with the GATOR2 complex which is composed of MIOS, SEC13, SEH1L, WDR24 and WDR59; the interaction is negatively regulated by leucine. Conveys leucine availability via direct interaction with SEH1L and WDR24 components of the GATOR2 complex. Interacts with RRAGA, RRAGB, RRAGC and RRAGD; may function as a guanine nucleotide dissociation inhibitor for RRAGs and regulate them. May interact with the TORC2 complex. Interacts with KEAP1, RBX1, SQSTM and ULK1; to regulate the degradation of KEAP1. May also associate with the complex composed of TSC1, TSC2 and the AMP-responsive protein kinase/AMPK to regulate TORC1 signaling. May interact with PRDX1. In terms of processing, phosphorylated by ULK1 at multiple sites. Ubiquitinated at Lys-175 by RNF167 via 'Lys-63'-linked polyubiquitination in response to leucine deprivation: ubiquitination promotes SESN2-interaction with the GATOR2 complex, leading to inhibit the TORC1 signaling pathway. Deubiquitinated at Lys-175 by STAMBPL1, promoting the TORC1 signaling pathway. Ubiquitinated by RNF186; ubiquitination mediates proteasomal degradation. In terms of tissue distribution, widely expressed.

The protein localises to the cytoplasm. The catalysed reaction is a hydroperoxide + L-cysteinyl-[protein] = S-hydroxy-L-cysteinyl-[protein] + an alcohol. Functionally, functions as an intracellular leucine sensor that negatively regulates the mTORC1 signaling pathway through the GATOR complex. In absence of leucine, binds the GATOR subcomplex GATOR2 and prevents mTORC1 signaling. Binding of leucine to SESN2 disrupts its interaction with GATOR2 thereby activating the TORC1 signaling pathway. This stress-inducible metabolic regulator also plays a role in protection against oxidative and genotoxic stresses. May negatively regulate protein translation in response to endoplasmic reticulum stress, via mTORC1. May positively regulate the transcription by NFE2L2 of genes involved in the response to oxidative stress by facilitating the SQSTM1-mediated autophagic degradation of KEAP1. May also mediate TP53 inhibition of TORC1 signaling upon genotoxic stress. Moreover, may prevent the accumulation of reactive oxygen species (ROS) through the alkylhydroperoxide reductase activity born by the N-terminal domain of the protein. Was originally reported to contribute to oxidative stress resistance by reducing PRDX1. However, this could not be confirmed. The polypeptide is Sestrin-2 (Homo sapiens (Human)).